A 320-amino-acid polypeptide reads, in one-letter code: Ferrochelatase (320 aa).

His194 and Glu275 together coordinate Fe cation.

This sequence belongs to the ferrochelatase family. As to quaternary structure, monomer.

Its subcellular location is the cytoplasm. It carries out the reaction heme b + 2 H(+) = protoporphyrin IX + Fe(2+). The protein operates within porphyrin-containing compound metabolism; protoheme biosynthesis; protoheme from protoporphyrin-IX: step 1/1. Functionally, catalyzes the ferrous insertion into protoporphyrin IX. This chain is Ferrochelatase, found in Shigella flexneri serotype 5b (strain 8401).